We begin with the raw amino-acid sequence, 305 residues long: Thymidylate synthase (305 aa).

DUMP-binding positions include arginine 26 and 160-161 (RR). Cysteine 180 serves as the catalytic Nucleophile. DUMP-binding positions include 207–210 (RSCD), asparagine 218, and 248–250 (HLY). Aspartate 210 contacts (6R)-5,10-methylene-5,6,7,8-tetrahydrofolate. Alanine 304 is a binding site for (6R)-5,10-methylene-5,6,7,8-tetrahydrofolate.

The protein belongs to the thymidylate synthase family. Bacterial-type ThyA subfamily. As to quaternary structure, homodimer.

The protein localises to the cytoplasm. It catalyses the reaction dUMP + (6R)-5,10-methylene-5,6,7,8-tetrahydrofolate = 7,8-dihydrofolate + dTMP. It participates in pyrimidine metabolism; dTTP biosynthesis. Its function is as follows. Catalyzes the reductive methylation of 2'-deoxyuridine-5'-monophosphate (dUMP) to 2'-deoxythymidine-5'-monophosphate (dTMP) while utilizing 5,10-methylenetetrahydrofolate (mTHF) as the methyl donor and reductant in the reaction, yielding dihydrofolate (DHF) as a by-product. This enzymatic reaction provides an intracellular de novo source of dTMP, an essential precursor for DNA biosynthesis. The sequence is that of Thymidylate synthase from Sinorhizobium fredii (strain NBRC 101917 / NGR234).